Reading from the N-terminus, the 89-residue chain is Small ribosomal subunit protein uS15 (89 aa).

The protein belongs to the universal ribosomal protein uS15 family. Part of the 30S ribosomal subunit. Forms a bridge to the 50S subunit in the 70S ribosome, contacting the 23S rRNA.

In terms of biological role, one of the primary rRNA binding proteins, it binds directly to 16S rRNA where it helps nucleate assembly of the platform of the 30S subunit by binding and bridging several RNA helices of the 16S rRNA. Functionally, forms an intersubunit bridge (bridge B4) with the 23S rRNA of the 50S subunit in the ribosome. This is Small ribosomal subunit protein uS15 from Haemophilus influenzae (strain PittGG).